A 260-amino-acid chain; its full sequence is Nuclear receptor subfamily 0 group B member 2 (260 aa).

The NR LBD domain occupies 16–260; the sequence is SHPTILYTLL…ELLEDMLLLR (245 aa). Arg57 bears the Symmetric dimethylarginine; by PRMT5 mark.

It belongs to the nuclear hormone receptor family. NR0 subfamily. In terms of assembly, heterodimer; efficient DNA binding requires dimerization with another bHLH protein. Interacts (via N-terminus) with NEUROD1 (via N-terminus and C-terminus). Interacts with ID2. Interacts with NR1I3 and EID1. Interacts with RARA, RXRA, THRB, NR5A1, NR5A2, PPARA and PPARG. Interacts with RORG, NFIL3, NR1D1 and BHLHE41. Interacts with HNF4A; the resulting heterodimer is transcriptionally inactive. Interacts with DDX3X; this interaction disrupts the interaction between HNF4 and NR0B2/SHP that forms inactive heterodimers and enhances the formation of active HNF4 homodimers. Arginine methylation by PRMT5 enhances repression activity of metabolic genes in liver in response to bile acid signaling, by increasing interaction with cofactors. As to expression, detected in kidney, testis, heart and liver.

The protein resides in the cytoplasm. It is found in the nucleus. In terms of biological role, transcriptional regulator that acts as a negative regulator of receptor-dependent signaling pathways. Specifically inhibits transactivation of the nuclear receptor with which it interacts. Inhibits transcriptional activity of NEUROD1 on E-box-containing promoter by interfering with the coactivation function of the p300/CBP-mediated transcription complex for NEUROD1. Essential component of the liver circadian clock which via its interaction with NR1D1 and RORG regulates NPAS2-mediated hepatic lipid metabolism. Regulates the circadian expression of cytochrome P450 (CYP) enzymes. Represses: NR5A2 and HNF4A to down-regulate CYP2C38, NFLI3 to up-regulate CYP2A5, BHLHE41/HNF1A axis to up-regulate CYP1A2, CYP2E1 and CYP3A11, and NR1D1 to up-regulate CYP2B10, CYP4A10 and CYP4A14. This chain is Nuclear receptor subfamily 0 group B member 2 (Nr0b2), found in Rattus norvegicus (Rat).